Consider the following 397-residue polypeptide: Riboflavin biosynthesis protein RibBA (397 aa).

The DHBP synthase stretch occupies residues 1–199 (MFHRIEEALE…IEDLIAYRRH (199 aa)). Residues 26 to 27 (RE), D31, 138 to 142 (RAGHT), and E162 each bind D-ribulose 5-phosphate. Position 27 (E27) interacts with Mg(2+). Residue H141 coordinates Mg(2+). Positions 200–397 (HETLVTREAE…VNKLGHLLNL (198 aa)) are GTP cyclohydrolase II. 250-254 (RVHSE) lines the GTP pocket. Residues C255, C266, and C268 each coordinate Zn(2+). Residues Q271, 293-295 (EGR), and T315 contribute to the GTP site. D327 (proton acceptor; for GTP cyclohydrolase activity) is an active-site residue. The active-site Nucleophile; for GTP cyclohydrolase activity is the R329. Residues T350 and K355 each contribute to the GTP site.

It in the N-terminal section; belongs to the DHBP synthase family. The protein in the C-terminal section; belongs to the GTP cyclohydrolase II family. Mg(2+) is required as a cofactor. The cofactor is Mn(2+). Zn(2+) serves as cofactor.

It catalyses the reaction D-ribulose 5-phosphate = (2S)-2-hydroxy-3-oxobutyl phosphate + formate + H(+). The enzyme catalyses GTP + 4 H2O = 2,5-diamino-6-hydroxy-4-(5-phosphoribosylamino)-pyrimidine + formate + 2 phosphate + 3 H(+). It participates in cofactor biosynthesis; riboflavin biosynthesis; 2-hydroxy-3-oxobutyl phosphate from D-ribulose 5-phosphate: step 1/1. Its pathway is cofactor biosynthesis; riboflavin biosynthesis; 5-amino-6-(D-ribitylamino)uracil from GTP: step 1/4. Catalyzes the conversion of D-ribulose 5-phosphate to formate and 3,4-dihydroxy-2-butanone 4-phosphate. Functionally, catalyzes the conversion of GTP to 2,5-diamino-6-ribosylamino-4(3H)-pyrimidinone 5'-phosphate (DARP), formate and pyrophosphate. The protein is Riboflavin biosynthesis protein RibBA of Bacillus cereus (strain ATCC 14579 / DSM 31 / CCUG 7414 / JCM 2152 / NBRC 15305 / NCIMB 9373 / NCTC 2599 / NRRL B-3711).